Here is a 271-residue protein sequence, read N- to C-terminus: Pyridoxine kinase (271 aa).

Residue asparagine 141 participates in ATP binding. Glutamate 144 serves as a coordination point for Mg(2+). ATP-binding positions include 178–182 (TGGGK), aspartate 190, isoleucine 206, glycine 215, and lysine 240.

It belongs to the ThiD family. In terms of assembly, homodimer.

The catalysed reaction is pyridoxal + ATP = pyridoxal 5'-phosphate + ADP + H(+). Phosphorylates B6 vitamers; functions in a salvage pathway. Uses pyridoxal, pyridoxine, and pyridoxamine as substrates. Can also use hydroxymethylpyrimidine (HMP) as substrate. In Bacillus subtilis (strain 168), this protein is Pyridoxine kinase (pdxK).